The chain runs to 231 residues: Ribose-5-phosphate isomerase A (231 aa).

Residues 32–35 (TGST), 85–88 (DGAD), and 98–101 (KGGG) each bind substrate. Residue glutamate 107 is the Proton acceptor of the active site. Residue lysine 125 coordinates substrate.

Belongs to the ribose 5-phosphate isomerase family. Homodimer.

It carries out the reaction aldehydo-D-ribose 5-phosphate = D-ribulose 5-phosphate. Its pathway is carbohydrate degradation; pentose phosphate pathway; D-ribose 5-phosphate from D-ribulose 5-phosphate (non-oxidative stage): step 1/1. Functionally, catalyzes the reversible conversion of ribose-5-phosphate to ribulose 5-phosphate. The protein is Ribose-5-phosphate isomerase A of Paraburkholderia phymatum (strain DSM 17167 / CIP 108236 / LMG 21445 / STM815) (Burkholderia phymatum).